Here is a 182-residue protein sequence, read N- to C-terminus: Large ribosomal subunit protein uL5 (182 aa).

The protein belongs to the universal ribosomal protein uL5 family. In terms of assembly, part of the 50S ribosomal subunit; part of the 5S rRNA/L5/L18/L25 subcomplex. Contacts the 5S rRNA and the P site tRNA. Forms a bridge to the 30S subunit in the 70S ribosome.

Functionally, this is one of the proteins that bind and probably mediate the attachment of the 5S RNA into the large ribosomal subunit, where it forms part of the central protuberance. In the 70S ribosome it contacts protein S13 of the 30S subunit (bridge B1b), connecting the 2 subunits; this bridge is implicated in subunit movement. Contacts the P site tRNA; the 5S rRNA and some of its associated proteins might help stabilize positioning of ribosome-bound tRNAs. The protein is Large ribosomal subunit protein uL5 of Nostoc sp. (strain PCC 7120 / SAG 25.82 / UTEX 2576).